We begin with the raw amino-acid sequence, 207 residues long: Protein 6b (207 aa).

Positions 160–183 are disordered; it reads GNYTEEGEDDDDEMDDEGEAGGAE. The segment covering 164–178 has biased composition (acidic residues); the sequence is EEGEDDDDEMDDEGE.

In terms of biological role, involved in tumor formation and increases auxin and cytokinin effects in host plants. The chain is Protein 6b (6b) from Agrobacterium tumefaciens (strain Ach5).